Consider the following 214-residue polypeptide: Eukaryotic translation initiation factor 4E-1B (214 aa).

Residues 53–54 (WQ), 99–100 (WE), 154–159 (RAKGDK), and 202–204 (TKS) contribute to the mRNA site.

As to expression, ovary, muscle and testis.

Its subcellular location is the cytoplasm. The protein resides in the nucleus. Its function is as follows. Does not appear to be a mRNA-cap-binding protein. The chain is Eukaryotic translation initiation factor 4E-1B from Danio rerio (Zebrafish).